The following is a 300-amino-acid chain: HTH-type transcriptional regulator ArgP (300 aa).

The 57-residue stretch at 4-60 (PDYRTLQALDAVIRERGFERAAQKLCITQSAVSQRIKQLENLFGQPLLVRTVPPRPT) folds into the HTH lysR-type domain. A DNA-binding region (H-T-H motif) is located at residues 21–40 (FERAAQKLCITQSAVSQRIK).

Belongs to the LysR transcriptional regulatory family. In terms of assembly, homodimer.

Functionally, controls the transcription of genes involved in arginine and lysine metabolism. The protein is HTH-type transcriptional regulator ArgP of Photorhabdus laumondii subsp. laumondii (strain DSM 15139 / CIP 105565 / TT01) (Photorhabdus luminescens subsp. laumondii).